The chain runs to 236 residues: Protein Thf1 (236 aa).

Residues 180–220 (PVEKMQKDLEQYRSNLEKMTQARKTLEDIVAAERKRRQQNA) are a coiled coil. Residues 206 to 236 (EDIVAAERKRRQQNAAPDRSPESASATEAPN) are disordered. The segment covering 227-236 (ESASATEAPN) has biased composition (polar residues).

The protein belongs to the THF1 family.

Functionally, may be involved in photosynthetic membrane biogenesis. This Cyanothece sp. (strain PCC 7425 / ATCC 29141) protein is Protein Thf1.